Here is a 267-residue protein sequence, read N- to C-terminus: Trehalose 2-sulfotransferase (267 aa).

Residues Gln14, 33–39 (EPQEFFQ), Pro48, and Trp53 contribute to the alpha,alpha-trehalose site. Catalysis depends on Glu36, which acts as the Proton acceptor.

Belongs to the Stf0 sulfotransferase family. In terms of assembly, homodimer.

It carries out the reaction alpha,alpha-trehalose + 3'-phosphoadenylyl sulfate = 2-O-sulfo-alpha,alpha-trehalose + adenosine 3',5'-bisphosphate + H(+). The protein operates within glycolipid metabolism. Catalyzes the sulfuryl group transfer from 3'-phosphoadenosine-5'-phosphosulfate (PAPS) to trehalose, leading to trehalose-2-sulfate (T2S). The sulfation of trehalose is the first step in the biosynthesis of sulfolipid-1 (SL-1), a major cell wall glycolipid in pathogenic mycobacteria. Cannot use free glucose and unnatural stereoisomers of trehalose (alpha,beta (neo-trehalose) and beta,beta (iso-trehalose)) as substrates. The protein is Trehalose 2-sulfotransferase of Mycolicibacterium smegmatis (strain ATCC 700084 / mc(2)155) (Mycobacterium smegmatis).